A 2359-amino-acid polypeptide reads, in one-letter code: Neuron navigator 3 (2359 aa).

Residues 77–184 (IEDSKIYTDW…LFFSLSRYKQ (108 aa)) enclose the Calponin-homology (CH) domain. Polar residues-rich tracts occupy residues 204-226 (THTA…SSLT), 233-243 (SKHSGIATSQK), 257-279 (ASSS…FNSI), and 300-317 (QPSS…TSGQ). Disordered stretches follow at residues 204-623 (THTA…QQQH) and 641-660 (ENEG…TKMD). Over residues 318–329 (PPASAIPSPSAS) the composition is skewed to low complexity. The span at 335 to 352 (KSMNVKHSATSTMLTVKQ) shows a compositional bias: polar residues. Composition is skewed to low complexity over residues 353 to 363 (PSPATSPTPSS) and 427 to 439 (NSGL…TNSS). The span at 465–491 (PKEKEEKTRDKNKACAEKSGKEEKDQV) shows a compositional bias: basic and acidic residues. Positions 522-536 (IPSSSGIPKPGSKVP) are enriched in low complexity. Residues 592 to 623 (ASPSSSCVMQVTHSSGQSPGNGAVQLPQQQQH) show a composition bias toward polar residues. The stretch at 680-708 (EARRMRTVKNIADLRQNLEETMSSLRGTQ) forms a coiled coil. 4 disordered regions span residues 878–1315 (ADSW…SPLF), 1413–1472 (LSES…AMSS), 1653–1758 (GALN…KPSQ), and 1829–1855 (ETGN…SRQS). 2 stretches are compositionally biased toward low complexity: residues 883-896 (DSSS…DTLD) and 904-916 (NTTS…SNIT). Residues 917-926 (VPSRKNTQLK) are compositionally biased toward polar residues. Residues 943–960 (EELKKAEGDCDSHGDGAA) are compositionally biased toward basic and acidic residues. Polar residues-rich tracts occupy residues 978 to 989 (QKASLSVSQTGS) and 997 to 1013 (QGGT…TSAL). Basic and acidic residues predominate over residues 1017–1029 (GKTDDAKASEKGK). Composition is skewed to low complexity over residues 1077–1095 (GAST…GSAT) and 1160–1173 (SSTS…SSKS). A compositionally biased stretch (polar residues) spans 1190–1199 (GRSSPVTVNQ). Composition is skewed to low complexity over residues 1209–1229 (VSDS…TSAS), 1256–1266 (GAKAGGKSASA), and 1274–1285 (SSSVVLSPSTSL). Gly residues predominate over residues 1299–1308 (GSMGSAGGLS). A compositionally biased stretch (basic and acidic residues) spans 1439–1448 (NQEEGKEWLR). Polar residues predominate over residues 1449–1461 (SHSTGGLQDTGNQ). Phosphoserine is present on residues S1462 and S1466. Positions 1462 to 1472 (SPLVSPSAMSS) are enriched in low complexity. Residues 1565–1656 (AEEKAHSEQI…AQAAIQGALN (92 aa)) adopt a coiled-coil conformation. Low complexity-rich tracts occupy residues 1675 to 1692 (SVSS…GSGN) and 1749 to 1758 (SGSSSMKPSQ). Residues 1768 to 1835 (EAEAEIILQL…LKAETGNTAK (68 aa)) are a coiled coil. Low complexity predominate over residues 1841 to 1855 (SDSSSTASSSSSRQS).

Belongs to the Nav/unc-53 family. Present in neurons from central and peripheral nervous systems (at protein level). Highly expressed in brain cortex, midbrain, cerebellum and hippocampus.

The protein localises to the nucleus outer membrane. Plays a role in cell migration. May be involved in neuron regeneration. May regulate IL2 production by T-cells. The polypeptide is Neuron navigator 3 (Nav3) (Mus musculus (Mouse)).